A 187-amino-acid chain; its full sequence is Putative lipoprotein LppJ (187 aa).

The first 28 residues, 1–28, serve as a signal peptide directing secretion; that stretch reads MPHSTADRRLRLTRQALLAAAVAPLLAG. Cys29 carries the N-palmitoyl cysteine lipid modification. The S-diacylglycerol cysteine moiety is linked to residue Cys29.

It localises to the cell membrane. This Mycobacterium bovis (strain ATCC BAA-935 / AF2122/97) protein is Putative lipoprotein LppJ (lppJ).